A 401-amino-acid chain; its full sequence is uncharacterized protein (401 aa).

A run of 10 helical transmembrane segments spans residues Phe20 to Tyr40, Ile49 to Ala69, Ile83 to Ala100, Tyr104 to Ile121, Val140 to Met160, Pro167 to Leu187, Phe207 to Tyr227, Met248 to Val268, Leu289 to Val309, and Gly357 to Leu377.

The protein belongs to the major facilitator superfamily.

Its subcellular location is the cell membrane. This is an uncharacterized protein from Bacillus subtilis (strain 168).